An 81-amino-acid chain; its full sequence is Sulfur carrier protein TusA (81 aa).

Residue Cys-19 is the Cysteine persulfide intermediate of the active site.

Belongs to the sulfur carrier protein TusA family.

The protein resides in the cytoplasm. Its function is as follows. Sulfur carrier protein which probably makes part of a sulfur-relay system. The chain is Sulfur carrier protein TusA from Aeromonas salmonicida (strain A449).